We begin with the raw amino-acid sequence, 725 residues long: Phosphoribosylformylglycinamidine synthase subunit PurL (725 aa).

The active site involves His-41. ATP contacts are provided by Tyr-44 and Lys-83. Glu-85 contacts Mg(2+). Substrate is bound by residues 86-89 and Arg-108; that span reads SHNH. Catalysis depends on His-87, which acts as the Proton acceptor. Asp-109 serves as a coordination point for Mg(2+). Gln-231 is a binding site for substrate. Asp-259 is a Mg(2+) binding site. 303 to 305 lines the substrate pocket; sequence ESQ. Asp-485 and Gly-522 together coordinate ATP. Asn-523 provides a ligand contact to Mg(2+). Ser-525 contacts substrate.

It belongs to the FGAMS family. Monomer. Part of the FGAM synthase complex composed of 1 PurL, 1 PurQ and 2 PurS subunits.

It is found in the cytoplasm. The catalysed reaction is N(2)-formyl-N(1)-(5-phospho-beta-D-ribosyl)glycinamide + L-glutamine + ATP + H2O = 2-formamido-N(1)-(5-O-phospho-beta-D-ribosyl)acetamidine + L-glutamate + ADP + phosphate + H(+). It participates in purine metabolism; IMP biosynthesis via de novo pathway; 5-amino-1-(5-phospho-D-ribosyl)imidazole from N(2)-formyl-N(1)-(5-phospho-D-ribosyl)glycinamide: step 1/2. Functionally, part of the phosphoribosylformylglycinamidine synthase complex involved in the purines biosynthetic pathway. Catalyzes the ATP-dependent conversion of formylglycinamide ribonucleotide (FGAR) and glutamine to yield formylglycinamidine ribonucleotide (FGAM) and glutamate. The FGAM synthase complex is composed of three subunits. PurQ produces an ammonia molecule by converting glutamine to glutamate. PurL transfers the ammonia molecule to FGAR to form FGAM in an ATP-dependent manner. PurS interacts with PurQ and PurL and is thought to assist in the transfer of the ammonia molecule from PurQ to PurL. The polypeptide is Phosphoribosylformylglycinamidine synthase subunit PurL (Thermus thermophilus (strain ATCC BAA-163 / DSM 7039 / HB27)).